The sequence spans 677 residues: Pannexin-2 (677 aa).

Over methionine 11–valine 53 the chain is Cytoplasmic. The helical transmembrane segment at valine 54–phenylalanine 74 threads the bilayer. Topologically, residues alanine 75–proline 125 are extracellular. Asparagine 86 carries an N-linked (GlcNAc...) asparagine glycan. The chain crosses the membrane as a helical span at residues tyrosine 126–alanine 146. The Cytoplasmic segment spans residues serine 147–arginine 230. The chain crosses the membrane as a helical span at residues histidine 231–threonine 251. Residues glutamine 252–aspartate 295 lie on the Extracellular side of the membrane. Residues isoleucine 296–phenylalanine 316 form a helical membrane-spanning segment. The Cytoplasmic portion of the chain corresponds to arginine 317–leucine 617. The segment covering threonine 394–proline 408 has biased composition (polar residues). Disordered stretches follow at residues threonine 394 to lysine 425 and alanine 485 to histidine 512. Phosphoserine is present on residues serine 593 and serine 604.

Belongs to the pannexin family. As to quaternary structure, homoheptameric. Post-translationally, S-palmitoylated in neural stem and progenitor cells. In terms of processing, cleaved by CASP3 and CASP7 during apoptosis. Cleavage has no effect on it function. In terms of tissue distribution, expression is enriched in central nervous system. Expressed in suprabasal layers of skin epidermis. More aboundantly expressed in skin.

It is found in the cell membrane. It localises to the golgi apparatus membrane. The protein localises to the endoplasmic reticulum membrane. The catalysed reaction is ATP(in) = ATP(out). The enzyme catalyses chloride(in) = chloride(out). It catalyses the reaction iodide(out) = iodide(in). It carries out the reaction Na(+)(in) = Na(+)(out). The catalysed reaction is D-gluconate(in) = D-gluconate(out). Functionally, ion channel with a slight anion preference. Also able to release ATP. Plays a role in regulating neurogenesis and apoptosis in keratinocytes. The protein is Pannexin-2 (Panx2) of Mus musculus (Mouse).